Here is a 415-residue protein sequence, read N- to C-terminus: Isocitrate dehydrogenase [NADP] 1 (415 aa).

Thr104 serves as a coordination point for NADP(+). 5 residues coordinate D-threo-isocitrate: Ser113, Asn115, Arg119, Arg129, and Arg153. Residue Asp307 coordinates Mg(2+). NADP(+) contacts are provided by residues 339–345 (HGTAPKY), Asn352, Tyr390, and Arg394.

This sequence belongs to the isocitrate and isopropylmalate dehydrogenases family. In terms of assembly, homodimer. It depends on Mg(2+) as a cofactor. Mn(2+) serves as cofactor.

The enzyme catalyses D-threo-isocitrate + NADP(+) = 2-oxoglutarate + CO2 + NADPH. Catalyzes the oxidative decarboxylation of isocitrate to 2-oxoglutarate and carbon dioxide with the concomitant reduction of NADP(+). The chain is Isocitrate dehydrogenase [NADP] 1 from Colwellia maris.